Here is a 492-residue protein sequence, read N- to C-terminus: Probable glycogen synthase 2 (492 aa).

K15 serves as a coordination point for ADP-alpha-D-glucose.

It belongs to the glycosyltransferase 1 family. Bacterial/plant glycogen synthase subfamily.

The enzyme catalyses [(1-&gt;4)-alpha-D-glucosyl](n) + ADP-alpha-D-glucose = [(1-&gt;4)-alpha-D-glucosyl](n+1) + ADP + H(+). It participates in glycan biosynthesis; glycogen biosynthesis. Its function is as follows. Synthesizes alpha-1,4-glucan chains using ADP-glucose. In Nostoc sp. (strain PCC 7120 / SAG 25.82 / UTEX 2576), this protein is Probable glycogen synthase 2 (glgA2).